A 102-amino-acid chain; its full sequence is 10 kDa heat shock protein, mitochondrial (102 aa).

N-acetylalanine is present on Ala2. At Lys8 the chain carries N6-acetyllysine. Lys28 is modified (N6-succinyllysine). Lys40 bears the N6-acetyllysine; alternate mark. N6-malonyllysine; alternate is present on residues Lys40, Lys54, and Lys56. Lys40, Lys54, Lys56, Lys66, and Lys70 each carry N6-succinyllysine; alternate. 3 positions are modified to N6-acetyllysine; alternate: Lys56, Lys66, and Lys70. Thr79 bears the Phosphothreonine mark. 2 positions are modified to N6-acetyllysine; alternate: Lys80 and Lys86. 2 positions are modified to N6-succinyllysine; alternate: Lys80 and Lys86. Lys99 carries the post-translational modification N6-acetyllysine.

It belongs to the GroES chaperonin family. In terms of assembly, homoheptamer arranged in a ring structure. 2 heptameric Hsp10 rings interact with a Hsp60 tetradecamer in the structure of a back-to-back double heptameric ring to form the symmetrical football complex.

It localises to the mitochondrion matrix. Its function is as follows. Co-chaperonin implicated in mitochondrial protein import and macromolecular assembly. Together with Hsp60, facilitates the correct folding of imported proteins. May also prevent misfolding and promote the refolding and proper assembly of unfolded polypeptides generated under stress conditions in the mitochondrial matrix. The functional units of these chaperonins consist of heptameric rings of the large subunit Hsp60, which function as a back-to-back double ring. In a cyclic reaction, Hsp60 ring complexes bind one unfolded substrate protein per ring, followed by the binding of ATP and association with 2 heptameric rings of the co-chaperonin Hsp10. This leads to sequestration of the substrate protein in the inner cavity of Hsp60 where, for a certain period of time, it can fold undisturbed by other cell components. Synchronous hydrolysis of ATP in all Hsp60 subunits results in the dissociation of the chaperonin rings and the release of ADP and the folded substrate protein. This Bos taurus (Bovine) protein is 10 kDa heat shock protein, mitochondrial (HSPE1).